The chain runs to 192 residues: Ion-translocating oxidoreductase complex subunit B (192 aa).

Residues 1–26 are hydrophobic; that stretch reads MNAIWIAVAAVSLLGLAFGAILGYAS. One can recognise a 4Fe-4S domain in the interval 32 to 91; that stretch reads EDDPVVEKIDEILPQSQCGQCGYPGCRPYAEAISCNGEKINRCAPGGEAVMLKIAELLNV. [4Fe-4S] cluster-binding residues include C49, C52, C57, C74, C117, C120, C123, C127, C147, C150, C153, and C157. 2 4Fe-4S ferredoxin-type domains span residues 108–137 and 138–167; these read MVAVIDENNCIGCTKCIQACPVDAIVGATR and AMHTVMSDLCTGCNLCVDPCPTHCISLQPV.

Belongs to the 4Fe4S bacterial-type ferredoxin family. RnfB subfamily. The complex is composed of six subunits: RsxA, RsxB, RsxC, RsxD, RsxE and RsxG. [4Fe-4S] cluster serves as cofactor.

The protein localises to the cell inner membrane. Part of a membrane-bound complex that couples electron transfer with translocation of ions across the membrane. Required to maintain the reduced state of SoxR. This Escherichia coli O8 (strain IAI1) protein is Ion-translocating oxidoreductase complex subunit B.